The chain runs to 415 residues: Squalene synthase 3 (415 aa).

2 consecutive transmembrane segments (helical) span residues 281 to 301 (AIFR…ALCY) and 392 to 412 (LIII…SNLP).

Belongs to the phytoene/squalene synthase family. Requires Mg(2+) as cofactor. Mn(2+) serves as cofactor.

Its subcellular location is the endoplasmic reticulum membrane. The enzyme catalyses 2 (2E,6E)-farnesyl diphosphate + NADH + H(+) = squalene + 2 diphosphate + NAD(+). The catalysed reaction is 2 (2E,6E)-farnesyl diphosphate + NADPH + H(+) = squalene + 2 diphosphate + NADP(+). It functions in the pathway terpene metabolism; lanosterol biosynthesis; lanosterol from farnesyl diphosphate: step 1/3. Its function is as follows. Component of the triterpene saponins (e.g. ginsenosides or panaxosides) and phytosterols biosynthetic pathways. Catalyzes the biosynthesis of squalene. The sequence is that of Squalene synthase 3 from Panax ginseng (Korean ginseng).